The following is a 561-amino-acid chain: Nucleoprotein (561 aa).

Positions 52 to 237 (VRKDKRTDSD…ISHEPSALNI (186 aa)) are binding site for the cap structure m7GTP. The segment at 336–355 (SKPSAIQPPVRNGGSPDLKQ) is disordered. Mn(2+) is bound by residues aspartate 380 and glutamate 382. Zn(2+) contacts are provided by glutamate 390, cysteine 497, histidine 500, and cysteine 521. Aspartate 525 is a binding site for Mn(2+).

Belongs to the arenaviridae nucleocapsid protein family. Homomultimerizes to form the nucleocapsid. Binds to viral genomic RNA. Interacts with glycoprotein G2. Interacts with protein Z; this interaction probably directs the encapsidated genome to budding sites. Interacts with protein L; this interaction does not interfere with Z-L interaction. Interacts with host IKBKE (via Protein kinase domain); the interaction inhibits IKBKE kinase activity.

The protein localises to the virion. It localises to the host cytoplasm. In terms of biological role, encapsidates the genome, protecting it from nucleases. The encapsidated genomic RNA is termed the nucleocapsid (NC). Serves as template for viral transcription and replication. The increased presence of protein N in host cell does not seem to trigger the switch from transcription to replication as observed in other negative strain RNA viruses. Through the interaction with host IKBKE, strongly inhibits the phosphorylation and nuclear translocation of host IRF3, a protein involved in interferon activation pathway, leading to the inhibition of interferon-beta and IRF3-dependent promoters activation. Also encodes a functional 3'-5' exoribonuclease that degrades preferentially dsRNA substrates and thereby participates in the suppression of interferon induction. This chain is Nucleoprotein, found in Cavia cutleri (Guinea pig).